A 383-amino-acid chain; its full sequence is Deoxyhypusine synthase-like protein (383 aa).

Belongs to the deoxyhypusine synthase family.

This Nostoc sp. (strain PCC 7120 / SAG 25.82 / UTEX 2576) protein is Deoxyhypusine synthase-like protein.